The chain runs to 172 residues: Translation initiation factor IF-3 (172 aa).

It belongs to the IF-3 family. As to quaternary structure, monomer.

It is found in the cytoplasm. IF-3 binds to the 30S ribosomal subunit and shifts the equilibrium between 70S ribosomes and their 50S and 30S subunits in favor of the free subunits, thus enhancing the availability of 30S subunits on which protein synthesis initiation begins. The chain is Translation initiation factor IF-3 from Geobacter sulfurreducens (strain ATCC 51573 / DSM 12127 / PCA).